The primary structure comprises 168 residues: MVNKNRQLKEQKVAEIKEKMGKTEAMIMVKYQGLNVEEDTELRKALREAGVEYRVYKNSLAVRAINELGYEGIAQYLEGPIAIAMSYDDPTAPARIINDFAKTHKALELVAGYVQGEVFDVNKVKELASVPAKEVLIAKLLGSFKAPLSNFAYLLSAIKDKKEAEEQA.

The protein belongs to the universal ribosomal protein uL10 family. As to quaternary structure, part of the ribosomal stalk of the 50S ribosomal subunit. The N-terminus interacts with L11 and the large rRNA to form the base of the stalk. The C-terminus forms an elongated spine to which L12 dimers bind in a sequential fashion forming a multimeric L10(L12)X complex.

Functionally, forms part of the ribosomal stalk, playing a central role in the interaction of the ribosome with GTP-bound translation factors. In Clostridium acetobutylicum (strain ATCC 824 / DSM 792 / JCM 1419 / IAM 19013 / LMG 5710 / NBRC 13948 / NRRL B-527 / VKM B-1787 / 2291 / W), this protein is Large ribosomal subunit protein uL10.